We begin with the raw amino-acid sequence, 155 residues long: Aspartate carbamoyltransferase regulatory chain (155 aa).

Residues Cys-112, Cys-117, Cys-140, and Cys-143 each coordinate Zn(2+).

The protein belongs to the PyrI family. As to quaternary structure, contains catalytic and regulatory chains. Zn(2+) serves as cofactor.

Its function is as follows. Involved in allosteric regulation of aspartate carbamoyltransferase. In Phocaeicola vulgatus (strain ATCC 8482 / DSM 1447 / JCM 5826 / CCUG 4940 / NBRC 14291 / NCTC 11154) (Bacteroides vulgatus), this protein is Aspartate carbamoyltransferase regulatory chain.